We begin with the raw amino-acid sequence, 319 residues long: Tetrahydromethanopterin S-methyltransferase subunit H (319 aa).

This sequence belongs to the MtrH family. The complex is composed of 8 subunits; MtrA, MtrB, MtrC, MtrD, MtrE, MtrF, MtrG and MtrH.

It carries out the reaction 5-methyl-5,6,7,8-tetrahydromethanopterin + coenzyme M + 2 Na(+)(in) = 5,6,7,8-tetrahydromethanopterin + methyl-coenzyme M + 2 Na(+)(out). Its pathway is one-carbon metabolism; methanogenesis from CO(2); methyl-coenzyme M from 5,10-methylene-5,6,7,8-tetrahydromethanopterin: step 2/2. Part of a complex that catalyzes the formation of methyl-coenzyme M and tetrahydromethanopterin from coenzyme M and methyl-tetrahydromethanopterin. This is an energy-conserving, sodium-ion translocating step. MtrH catalyzes the transfer of the methyl group from methyl-tetrahydromethanopterin to the corrinoid prosthetic group of MtrA. The polypeptide is Tetrahydromethanopterin S-methyltransferase subunit H (Methanococcus vannielii (strain ATCC 35089 / DSM 1224 / JCM 13029 / OCM 148 / SB)).